The primary structure comprises 468 residues: MRGIAVFLAFISLIFASPLTVKSPLVDDFYTAPDGYESAKLGEILKLRKTPSKLSSMFFEIDIKNSWQLLVRSEDSFGNATAIVTTVIEPYNADPSKVLSYQTFEDSANIECSPSYGMQYGAPWSTVATQIDMALMVPMLKQGYYVVSPDYEGPKSTFTVGRQSGKATLDSIRAILKSNKFTGIKSDAKVAMWGYSGGSLASGWAAALQPKYAPELKKNLIGAALGGFVTNITATAEATDGTLFAGLVPNALSGLANEYPEFKEILYQKVSKAATDNLRQGTEHCIGGAILYFAEDQYFTGDDRAFPGGYGLLKEEVVNKTISENNLMQMDKDYLPDIPIFVYHGALDSIVPISNVHVTYKNWCDWGINSFEFSEDLLNGHITETIVGAPAAITWLEARFDGEPVVKGCKKTSRITNFSYPNISDSTSSIFEGILNSVTGSELGPGVTSDNITLDGLTGFLGNFIDLK.

An N-terminal signal peptide occupies residues Met1–Ala16. Asn79 is a glycosylation site (N-linked (GlcNAc...) asparagine). Cys112 and Cys285 are oxidised to a cystine. Ser196 acts as the Charge relay system in catalysis. N-linked (GlcNAc...) asparagine glycans are attached at residues Asn231 and Asn319. Residues Asp348 and His381 each act as charge relay system in the active site. Cys364 and Cys409 are oxidised to a cystine. 3 N-linked (GlcNAc...) asparagine glycosylation sites follow: Asn417, Asn422, and Asn451.

Belongs to the AB hydrolase superfamily. Lipase family. Class Lip subfamily.

It localises to the secreted. It catalyses the reaction a triacylglycerol + H2O = a diacylglycerol + a fatty acid + H(+). Its function is as follows. Secreted lipase that is able to hydrolyze both the neutral triacylglycerols and the monopalmitate ester Tween 40, allowing the use of hydrolyzed products as carbon sources. Has broad lipolytic activity, which may be important for colonization and subsequent infection, therefore contributing to the persistence and virulence in human tissue. This is Lipase 1 from Candida albicans (strain SC5314 / ATCC MYA-2876) (Yeast).